The sequence spans 519 residues: C-glycoside 3-oxidase (519 aa).

Glutamate 41 provides a ligand contact to FAD. The segment at 43-93 is disordered; the sequence is GPTVSNPPGAHVKNIEDPERRSHAQRASEGPGAGAETVNSPGAVKSGERRA. Residues 55 to 64 are compositionally biased toward basic and acidic residues; it reads KNIEDPERRS. Positions 118, 120, 124, 129, 131, and 234 each coordinate FAD. The active-site Proton acceptor is the histidine 440. The FAD site is built by asparagine 474 and threonine 486.

This sequence belongs to the GMC oxidoreductase family. As to quaternary structure, monomer. It depends on FAD as a cofactor.

The catalysed reaction is isovitexin + O2 = 3''-dehydroisovitexin + H2O2. It carries out the reaction isoorientin + O2 = 3''-dehydroisoorientin + H2O2. The enzyme catalyses mangiferin + O2 = 3'-dehydromangiferin + H2O2. Its function is as follows. FAD-dependent C-glycoside-metabolizing enzyme that participates in the degradation of certain C-glycosides by catalyzing the oxidation of the hydroxyl group at the C3 position of the sugar moiety. Shows oxidase activity toward various C-glycosides such as isovitexin, isoorientin and mangiferin but cannot use carminic acid, puerarin, orientin or aloesin. Shows weak activity (100 to 1000-fold lower) with O-glycosides. Probably plays a crucial role in the metabolism of C-glycosides in nature. This is C-glycoside 3-oxidase from Arthrobacter globiformis (strain ATCC 8010 / DSM 20124 / JCM 1332 / NBRC 12137 / NCIMB 8907 / NRRL B-2979 / 168).